The primary structure comprises 336 residues: Mitochondrial import receptor subunit TOM40 homolog (336 aa).

Positions 1–58 (MGNVLAASSPAPPPAGSPPVPGLVSVPPGFTMPPVAGLTPTPDKKEPQEERLPNPGTF) are disordered. Residues 10–21 (PAPPPAGSPPVP) show a composition bias toward pro residues. The segment covering 42-52 (PDKKEPQEERL) has biased composition (basic and acidic residues).

It belongs to the Tom40 family. In terms of assembly, forms part of the preprotein translocase complex of the outer mitochondrial membrane (TOM complex). Interacts with mitochondrial targeting sequences.

Its subcellular location is the mitochondrion outer membrane. In terms of biological role, channel-forming protein essential for import of protein precursors into mitochondria. The protein is Mitochondrial import receptor subunit TOM40 homolog (tomm40) of Xenopus laevis (African clawed frog).